The following is a 650-amino-acid chain: Probable potassium transport system protein Kup 1 (650 aa).

Transmembrane regions (helical) follow at residues 12–32, 54–74, 97–117, 139–159, 170–190, 216–236, 249–269, 295–315, 344–364, 375–395, 400–420, and 428–448; these read GLLI…LYVM, ISLV…IIAL, WLVL…TLTP, VSSQ…LFSI, AFGP…LINM, AGIF…ALYS, SWPF…VWIL, LAAI…LITG, IYIP…VLYF, GLSI…WLAM, PVWN…FMIS, and GGYV…VWYY.

It belongs to the HAK/KUP transporter (TC 2.A.72) family.

Its subcellular location is the cell membrane. The enzyme catalyses K(+)(in) + H(+)(in) = K(+)(out) + H(+)(out). Its function is as follows. Transport of potassium into the cell. Likely operates as a K(+):H(+) symporter. The sequence is that of Probable potassium transport system protein Kup 1 from Lactobacillus acidophilus (strain ATCC 700396 / NCK56 / N2 / NCFM).